Here is a 107-residue protein sequence, read N- to C-terminus: uncharacterized protein (107 aa).

Transmembrane regions (helical) follow at residues 5 to 25 (WTII…VINV) and 42 to 62 (ILVI…VGIF). Basic and acidic residues predominate over residues 82 to 92 (IHKQEDTHLAD). Residues 82–107 (IHKQEDTHLADQTDTQDASAMIEKKD) form a disordered region.

It is found in the cell membrane. This is an uncharacterized protein from Bacillus subtilis (strain 168).